The sequence spans 154 residues: 3-hydroxyacyl-[acyl-carrier-protein] dehydratase FabZ (154 aa).

His-54 is an active-site residue.

It belongs to the thioester dehydratase family. FabZ subfamily.

Its subcellular location is the cytoplasm. The enzyme catalyses a (3R)-hydroxyacyl-[ACP] = a (2E)-enoyl-[ACP] + H2O. Its function is as follows. Involved in unsaturated fatty acids biosynthesis. Catalyzes the dehydration of short chain beta-hydroxyacyl-ACPs and long chain saturated and unsaturated beta-hydroxyacyl-ACPs. The protein is 3-hydroxyacyl-[acyl-carrier-protein] dehydratase FabZ of Shewanella sp. (strain MR-4).